The following is a 471-amino-acid chain: Anthranilate 1,2-dioxygenase large subunit (471 aa).

Positions 52-160 (IYACHESEIP…IASYRGFVFV (109 aa)) constitute a Rieske domain. [2Fe-2S] cluster contacts are provided by cysteine 93, histidine 95, cysteine 113, and histidine 116. Residues histidine 220, histidine 225, and aspartate 379 each coordinate Fe cation.

The protein belongs to the bacterial ring-hydroxylating dioxygenase alpha subunit family. In terms of assembly, the anthranilate dioxygenase (AntDO) multicomponent enzyme system is composed of an oxygenase component and a NADH:acceptor reductase component (AntC). The oxygenase component is a heterohexamer of 3 large (AntA) and 3 small (AntB) subunits. The cofactor is Fe cation. It depends on [2Fe-2S] cluster as a cofactor.

The catalysed reaction is anthranilate + NADH + O2 + 3 H(+) = catechol + NH4(+) + CO2 + NAD(+). It carries out the reaction anthranilate + NADPH + O2 + 3 H(+) = catechol + NH4(+) + CO2 + NADP(+). The protein operates within aromatic compound metabolism; anthranilate degradation via hydroxylation; catechol from anthranilate: step 1/1. Functionally, component of anthranilate dioxygenase multicomponent enzyme system which catalyzes the incorporation of both atoms of molecular oxygen into anthranilate to form catechol. This Acinetobacter baylyi (strain ATCC 33305 / BD413 / ADP1) protein is Anthranilate 1,2-dioxygenase large subunit.